The chain runs to 770 residues: Nucleus-vacuole junction protein 2 (770 aa).

The Cytoplasmic portion of the chain corresponds to 1–5; the sequence is MASLK. Residues 6–26 form a helical; Signal-anchor for type II membrane protein membrane-spanning segment; the sequence is VFLAVYLLGGITFLPLVLFTL. The Lumenal portion of the chain corresponds to 27-770; the sequence is YKIHLLYSNL…EFEEQREPKL (744 aa). Residues 114 to 266 enclose the PH domain; sequence TALQEQILQR…WYYQLINASK (153 aa). Asn-228, Asn-263, Asn-279, Asn-300, Asn-391, Asn-528, and Asn-529 each carry an N-linked (GlcNAc...) asparagine glycan. Positions 304–504 constitute an SMP-LTD domain; the sequence is NQLTTKWLNA…YPTPNEVYRG (201 aa). 3 disordered regions span residues 541-566, 578-600, and 615-770; these read EGGM…LKDL, TQTT…TKSR, and KDNV…EPKL. Residues 554-566 show a composition bias toward basic and acidic residues; the sequence is LRPERKKENLKDL. Residues 587–596 show a composition bias toward polar residues; that stretch reads NDDVSSSENS. 2 N-linked (GlcNAc...) asparagine glycosylation sites follow: Asn-595 and Asn-620. A phosphoserine mark is found at Ser-640 and Ser-669. The segment covering 679-688 has biased composition (basic and acidic residues); sequence LEGRKEKDTE. Asn-700 is a glycosylation site (N-linked (GlcNAc...) asparagine). Composition is skewed to polar residues over residues 713 to 725 and 736 to 751; these read FSVS…NSLK and LESS…QNRF. Position 717 is a phosphoserine (Ser-717). A glycan (N-linked (GlcNAc...) asparagine) is linked at Asn-718. Ser-720 and Ser-723 each carry phosphoserine. Basic and acidic residues predominate over residues 756 to 770; sequence FKQDLEFEEQREPKL.

Its subcellular location is the endoplasmic reticulum membrane. It localises to the nucleus membrane. During endoplasmic reticulum (ER) stress or when cellular ceramide levels increase, induces contacts between the ER and medial-Golgi complex to facilitate non-vesicular transport of ceramides from the ER to the Golgi complex where they are converted to complex sphingolipids, preventing toxic ceramide accumulation. In Saccharomyces cerevisiae (strain ATCC 204508 / S288c) (Baker's yeast), this protein is Nucleus-vacuole junction protein 2.